A 496-amino-acid chain; its full sequence is Lysine--tRNA ligase (496 aa).

Residues E409 and E416 each coordinate Mg(2+).

This sequence belongs to the class-II aminoacyl-tRNA synthetase family. Homodimer. Mg(2+) is required as a cofactor.

It is found in the cytoplasm. The enzyme catalyses tRNA(Lys) + L-lysine + ATP = L-lysyl-tRNA(Lys) + AMP + diphosphate. The polypeptide is Lysine--tRNA ligase (Streptococcus pneumoniae serotype 19F (strain G54)).